The following is a 280-amino-acid chain: Putative pyruvate, phosphate dikinase regulatory protein (280 aa).

An ADP-binding site is contributed by 156–163 (GVSRTSKT).

The protein belongs to the pyruvate, phosphate/water dikinase regulatory protein family. PDRP subfamily.

The enzyme catalyses N(tele)-phospho-L-histidyl/L-threonyl-[pyruvate, phosphate dikinase] + ADP = N(tele)-phospho-L-histidyl/O-phospho-L-threonyl-[pyruvate, phosphate dikinase] + AMP + H(+). It carries out the reaction N(tele)-phospho-L-histidyl/O-phospho-L-threonyl-[pyruvate, phosphate dikinase] + phosphate + H(+) = N(tele)-phospho-L-histidyl/L-threonyl-[pyruvate, phosphate dikinase] + diphosphate. Its function is as follows. Bifunctional serine/threonine kinase and phosphorylase involved in the regulation of the pyruvate, phosphate dikinase (PPDK) by catalyzing its phosphorylation/dephosphorylation. The polypeptide is Putative pyruvate, phosphate dikinase regulatory protein (Hyphomonas neptunium (strain ATCC 15444)).